The sequence spans 301 residues: Phosphoribosylaminoimidazole-succinocarboxamide synthase (301 aa).

This sequence belongs to the SAICAR synthetase family.

It catalyses the reaction 5-amino-1-(5-phospho-D-ribosyl)imidazole-4-carboxylate + L-aspartate + ATP = (2S)-2-[5-amino-1-(5-phospho-beta-D-ribosyl)imidazole-4-carboxamido]succinate + ADP + phosphate + 2 H(+). Its pathway is purine metabolism; IMP biosynthesis via de novo pathway; 5-amino-1-(5-phospho-D-ribosyl)imidazole-4-carboxamide from 5-amino-1-(5-phospho-D-ribosyl)imidazole-4-carboxylate: step 1/2. The polypeptide is Phosphoribosylaminoimidazole-succinocarboxamide synthase (Syntrophobacter fumaroxidans (strain DSM 10017 / MPOB)).